The sequence spans 540 residues: Collagen alpha-1(XXIII) chain (540 aa).

Residues 1-26 show a composition bias toward gly residues; that stretch reads MGPGERAGGGGDAGKGNAAGGGGGGR. Residues 1-28 form a disordered region; sequence MGPGERAGGGGDAGKGNAAGGGGGGRSA. The Cytoplasmic segment spans residues 1–34; the sequence is MGPGERAGGGGDAGKGNAAGGGGGGRSATTAGSR. A helical; Signal-anchor for type II membrane protein transmembrane segment spans residues 35–56; that stretch reads AVSALCLLLSVGSAAACLLLGV. Residues 57–540 are Extracellular-facing; the sequence is QAAALQGRVA…GLPVPGCWHK (484 aa). 2 disordered regions span residues 109 to 304 and 316 to 540; these read AREA…GEQG and LDAL…CWHK. Collagen-like domains are found at residues 124–243, 251–305, 321–380, 412–460, and 463–522; these read GRRG…PGKK, QPGP…EQGD, GPPG…MGLS, GPPG…GPPG, and GLPG…PGLD. 2 stretches are compositionally biased toward low complexity: residues 140 to 156 and 168 to 183; these read QSGR…DGKP and PGDF…DGAA. Positions 185-195 are enriched in pro residues; the sequence is PPGPPGPPGAR. Positions 322–334 are enriched in pro residues; that stretch reads PPGPQGPPGPPGI. The span at 350–362 shows a compositional bias: basic and acidic residues; it reads DGEKGPKGQKGDP. The segment covering 411 to 422 has biased composition (pro residues); it reads PGPPGPPGPPGP. Composition is skewed to basic and acidic residues over residues 435 to 444 and 486 to 503; these read DGAKGEKGAS and RGEK…ERGV.

Homotrimer. Post-translationally, undergoes proteolytic cleavage by furin protease to yield a 60 kDa soluble form that forms a homotrimer and exhibits a low affinity interaction with heparin.

The protein localises to the cell membrane. The sequence is that of Collagen alpha-1(XXIII) chain (COL23A1) from Homo sapiens (Human).